The chain runs to 363 residues: S-adenosylmethionine:tRNA ribosyltransferase-isomerase (363 aa).

Belongs to the QueA family. Monomer.

The protein localises to the cytoplasm. The catalysed reaction is 7-aminomethyl-7-carbaguanosine(34) in tRNA + S-adenosyl-L-methionine = epoxyqueuosine(34) in tRNA + adenine + L-methionine + 2 H(+). It functions in the pathway tRNA modification; tRNA-queuosine biosynthesis. Its function is as follows. Transfers and isomerizes the ribose moiety from AdoMet to the 7-aminomethyl group of 7-deazaguanine (preQ1-tRNA) to give epoxyqueuosine (oQ-tRNA). The protein is S-adenosylmethionine:tRNA ribosyltransferase-isomerase of Pasteurella multocida (strain Pm70).